The chain runs to 348 residues: Heat-inducible transcription repressor HrcA (348 aa).

It belongs to the HrcA family.

Functionally, negative regulator of class I heat shock genes (grpE-dnaK-dnaJ and groELS operons). Prevents heat-shock induction of these operons. This is Heat-inducible transcription repressor HrcA from Lacticaseibacillus casei (strain BL23) (Lactobacillus casei).